The primary structure comprises 2381 residues: MDALHLACHLPGGITSPSGLWDYVYNKKSAQCTVPLDRYNIEGFYHKDGSRAGVMSVDGGYFIQEDVRKFDPSFFGINNLEASYMDPQQRKLLEVVYECFENAGLSMEDVSGSNTAVFVGNFTVDYSVMQSRDTDYVHRLAATGGGTSIMSNRISHVFNLHGPSFTLDTACSSTIYALHQAVNAIKNGDCDAAIVAGANLITSPEQHFGTAKGGFLSPTSACHTFDTSADGYARAEALNAIYITRLSSAMKSDRKIHAVIRGTAINANGKTPGITLPDAKMQAAVIRKAYQNAGLSFADTDYVECHGTGTPVGDPIEVDGIAACFAGREGEPLRIGSVKTNMGHSEAASGLTSIIKVALAFEHGMIPPTYGVKNLNPKLKLKERNMKVLTEVEAWPRALRRAGVNSFGYGGANGHVILESIDSYFVGSLVSSPITRALSNPYESEKDYVVVIPFSASSGKSLEARRKQAIETVEKTEASALKPLAAAMSKRQTKMRLRDYVLASASSNSQPSLIDMTDVGDKASPGTQPLPFAFVFTGQGAQYANMAKELVEQDFGFLTSIRDLDEVLQSLPAEYKPSWTLEQTILDKPATSKINDVTRSQPICTAVQVSLVNMLQSWGVSPSAVIGHSSGEIAAAYGSGLLTASEAILAAYFRGFAVGQLQSRGAMMAVGITPDGAIALIEQLGLKEVRVACVNAPESVTLSGAVKDIDSLQAKLQKEKKFARKLETGGRAYHSHMMAEIGDLYESLVTPYITVKKVAEMEVKMFSTVGHSIDALGTVDLSTEMASYFRKNLEQPVQFSAGLANMITSNKYHLIEIGPHSALKGPIQQIRTSAKRDKEGVPYSPTLVRKENSYVCLKKLAGTLFSYGHSLDWYAVNNVPRYHALPTPPLASYPWDYSKPLPWHEPRASVEHRLRKHVRHELLGTRATAGNGIEWCWRNIPRMSEMPWLRDHKLGESQVVLPGAAYMAMAIEAFSQVHEIKGKLIAGEPFSFEFENVNISAAFVVPDENDAEADKTELHTLMSPRKISTANISGNWHEFSISSWVSGIATLHCMGSIRVMESTLKPKDGSVMISGNGHEVWGMSRWYAKAKEEGLNFGPTFQSLTSLHTDGNRTSTDSIATTLLDPPSAAATGMFYAVHPITIDACFQATIMGGTAGNINTLRAYVPVFVSSCSIQIPRGGSASLGEEEVRIHSRMEKTGFSTRAVSFTLRLPDGTPVIDMPHLRMNEYTGKAPVEPETSIYLQRQPCLRVQWKPDVLRLRPGSDGAIREYIASFAAQQSDDLKDNGALVVFAALLDLFGHKVPRMSVLELGQESQWTPKDCQSILGKGTAFPRFRLWNDGKLGDNSKIIVDNAKNSDSYDVVLIPHLSVSNKIWAEAADAIISLISDDGIIITRRSKDVVSALKTSGFVVLELPNETLVAVRSPKQTGLENKEVVIVKPNEASPSINSLATAVATHLKNAGVVQLRTVTIDSIETVNLNSQVVCVSLLEMEHEFLATINSEDMDRFRKITDNVGDLLWLTGANMLSTPNPDLTLSSGLSRALMLEQPALRYAILDVGADISKPNSMELICNSVSASLVFRHATDDKEFIQKDGIVYISRFVPDVELNALFRHRMTPDSMKLVPLREVGPAKLSIGQVGMTDTIHFQQISERKTTPPAGFVDVDLRAIGLNAKDVYALNGRAETRSATTALDFGGVISAVGPGIEHLKVGDRVAGFIPNHFGTTERVTVQAVHKMLPEEEFTVLPTLLTVYCTALVALRDRAHLRAGESILIHSGAGAFGLAAITMAKYMGATVFATVGSHSKREYLIKEMGVPTENIFNSRSASFMEDILAATGGRGVNVIVNSLVGDLMHASWSCIAPFGRFVEIGKRELIDAGKLDMRVFLKNATFTAFDLSEFFYAEDSYYQDIVYGYTAEVIEMYRAGIIKASPIATFDVAEIGQAYRYFGNKDRVGKVVVSMENSRSLIQVVPASYQSVFHPEKTYLLVGCLGGLGRSLSRWMMSRGARKFCFLGRSGCDKPSAAELVNRLRDAGASVTVVRGDVSNEDQVREAVAACSKKGPIGGVVQAAMGLSEALFSVMTNKAWHTGIQPKWKGSWNLHHALEGHDADLDFFLLTSSISGSCGTATESNYCSANGFLDSFARWRRSQGKPAVSVGLGMISEVGYLHENPDIEAMLLRKGIQPLNEDEFLQVLDYGISGPGSDSEFGRGVSMTSESAHILTGLESYGVRKLMAQGFEVNNGVMDESRTSILAASLLSEKDAKEEEKGADVGQLLAAAEWVKDVPANALSMLIPEASAPTMLDAILRLTKKRFSNLILMQLDAVDDSAPLPSFGVDSMLAAEFRTWFFNTFKIDVPFLDIVSPQKSLHTLAEFIEEKLVASWAS.

The region spanning 1–420 is the Ketosynthase family 3 (KS3) domain; it reads MDALHLACHL…GANGHVILES (420 aa). Active-site for beta-ketoacyl synthase activity residues include Cys-171, His-306, and His-344. The tract at residues 535-851 is malonyl-CoA:ACP transacylase (MAT) domain; that stretch reads VFTGQGAQYA…PYSPTLVRKE (317 aa). The For malonyltransferase activity role is filled by Ser-629. The tract at residues 920-1064 is N-terminal hotdog fold; that stretch reads HELLGTRATA…GSIRVMESTL (145 aa). A dehydratase (DH) domain region spans residues 920 to 1232; it reads HELLGTRATA…HLRMNEYTGK (313 aa). The region spanning 920–1235 is the PKS/mFAS DH domain; that stretch reads HELLGTRATA…MNEYTGKAPV (316 aa). The active-site Proton acceptor; for dehydratase activity is the His-952. The interval 1078 to 1235 is C-terminal hotdog fold; sequence HEVWGMSRWY…MNEYTGKAPV (158 aa). Asp-1144 serves as the catalytic Proton donor; for dehydratase activity. Residues 1639 to 1956 are enoyl reductase (ER) domain; sequence GMTDTIHFQQ…NKDRVGKVVV (318 aa). The segment at 1981 to 2159 is ketoreductase (KR) domain; that stretch reads TYLLVGCLGG…AVSVGLGMIS (179 aa). One can recognise a Carrier domain in the interval 2297-2375; that stretch reads TMLDAILRLT…TLAEFIEEKL (79 aa). Ser-2334 is modified (O-(pantetheine 4'-phosphoryl)serine).

It participates in secondary metabolite biosynthesis. Functionally, highly reducing polyketide synthase; part of the gene cluster that mediates the biosynthesis of virensols and trichoxide, fungal natural products that contain or are derived from a salicylaldehyde core. The pathway begins with the synthesis of the reduced chain in virensol C by the highly reducing polyketide synthase virA via condensation of one acetate and 8 malonate units. VirA has interesting programming rules since the first 2 ketides are fully reduced, the 3 following ketides undergo beta-dehydration, and the last 3 ketides are only reduced to beta-hydroxys to yield the trihydroxy portion. The production of aldehyde virensol C by virA alone is surprising, since virA does not contain a reductase (R) domain that is typically associated with reductive product release in HRPKS. The cupin-domain enzyme virC is involved in enhancing virA product turnover. The short-chain dehydrogenase virB then oxidizes the C-7 alcohol of virensol C to a ketone, yielding virensol D. Virensol D is further transformed to salicylaldehyde 5-deoxyaurocitrin by the short-chain dehydrogenase virD. VirD catalyzes the dehydrogenation of C-3 to form the beta-ketone aldehyde, which is followed by the generation of the nucleophilic C-2 that is required for the intramolecular aldol condensation between C-2 and C-7, itself followed by dehydration and aromatization which leads to salicylaldehyde 5-deoxyaurocitrin. While the dehydrogenation of virensol D is definitely catalyzed by virD, the aldol condensation and dehydration may be uncatalyzed or assisted by virD. The short chain dehydrogenase virG then converts salicylaldehyde 5-deoxyaurocitrin into virensol B which is further hydroxylated by the cytochrome P450 monooxygenase virE to yield the hydroquinone virensol A. VirI then may oxidize virensol A to form the quinone, while virH performs the epoxidation. Finally, the two remaining short-chain dehydrogenases, virK and virL, are probably responsible for reducing the ketones to the corresponding alcohols to furnish the epoxycyclohexanol structure in trichoxide. The chain is Highly reducing polyketide synthase virA from Hypocrea virens (strain Gv29-8 / FGSC 10586) (Gliocladium virens).